The following is a 210-amino-acid chain: Small ribosomal subunit protein uS3 (210 aa).

Residues 39–107 form the KH type-2 domain; that stretch reads IREKLMEKLK…EILLDIQEVK (69 aa).

This sequence belongs to the universal ribosomal protein uS3 family. In terms of assembly, part of the 30S ribosomal subunit. Forms a tight complex with proteins S10 and S14.

Functionally, binds the lower part of the 30S subunit head. Binds mRNA in the 70S ribosome, positioning it for translation. This is Small ribosomal subunit protein uS3 from Opitutus terrae (strain DSM 11246 / JCM 15787 / PB90-1).